Here is a 282-residue protein sequence, read N- to C-terminus: Protein MGF 505-3R (282 aa).

Belongs to the asfivirus MGF 505 family.

Its function is as follows. Plays a role in virus cell tropism, and may be required for efficient virus replication in macrophages. In Ornithodoros (relapsing fever ticks), this protein is Protein MGF 505-3R.